The primary structure comprises 151 residues: 3-hydroxyacyl-[acyl-carrier-protein] dehydratase FabZ (151 aa).

Residue His54 is part of the active site.

Belongs to the thioester dehydratase family. FabZ subfamily.

It localises to the cytoplasm. The catalysed reaction is a (3R)-hydroxyacyl-[ACP] = a (2E)-enoyl-[ACP] + H2O. Its function is as follows. Involved in unsaturated fatty acids biosynthesis. Catalyzes the dehydration of short chain beta-hydroxyacyl-ACPs and long chain saturated and unsaturated beta-hydroxyacyl-ACPs. The sequence is that of 3-hydroxyacyl-[acyl-carrier-protein] dehydratase FabZ from Blochmanniella floridana.